The following is a 390-amino-acid chain: 1-deoxy-D-xylulose 5-phosphate reductoisomerase (390 aa).

The NADPH site is built by threonine 10, glycine 11, serine 12, valine 13, glycine 38, asparagine 40, and asparagine 123. Lysine 124 is a binding site for 1-deoxy-D-xylulose 5-phosphate. Glutamate 125 lines the NADPH pocket. Aspartate 149 is a Mn(2+) binding site. 4 residues coordinate 1-deoxy-D-xylulose 5-phosphate: serine 150, glutamate 151, serine 175, and histidine 198. Glutamate 151 contributes to the Mn(2+) binding site. Glycine 204 is an NADPH binding site. 1-deoxy-D-xylulose 5-phosphate is bound by residues serine 211, asparagine 216, lysine 217, and glutamate 220. Mn(2+) is bound at residue glutamate 220.

It belongs to the DXR family. Mg(2+) is required as a cofactor. Mn(2+) serves as cofactor.

It catalyses the reaction 2-C-methyl-D-erythritol 4-phosphate + NADP(+) = 1-deoxy-D-xylulose 5-phosphate + NADPH + H(+). It functions in the pathway isoprenoid biosynthesis; isopentenyl diphosphate biosynthesis via DXP pathway; isopentenyl diphosphate from 1-deoxy-D-xylulose 5-phosphate: step 1/6. Catalyzes the NADPH-dependent rearrangement and reduction of 1-deoxy-D-xylulose-5-phosphate (DXP) to 2-C-methyl-D-erythritol 4-phosphate (MEP). In Paracoccus denitrificans (strain Pd 1222), this protein is 1-deoxy-D-xylulose 5-phosphate reductoisomerase.